A 687-amino-acid polypeptide reads, in one-letter code: Light-independent protochlorophyllide reductase subunit B (687 aa).

Asp36 is a [4Fe-4S] cluster binding site. The active-site Proton donor is Asp441. Gly576–Met577 provides a ligand contact to substrate.

It belongs to the ChlB/BchB/BchZ family. As to quaternary structure, protochlorophyllide reductase is composed of three subunits; ChlL, ChlN and ChlB. Forms a heterotetramer of two ChlB and two ChlN subunits. The cofactor is [4Fe-4S] cluster.

The protein localises to the plastid. It is found in the chloroplast. It catalyses the reaction chlorophyllide a + oxidized 2[4Fe-4S]-[ferredoxin] + 2 ADP + 2 phosphate = protochlorophyllide a + reduced 2[4Fe-4S]-[ferredoxin] + 2 ATP + 2 H2O. Its pathway is porphyrin-containing compound metabolism; chlorophyll biosynthesis (light-independent). Component of the dark-operative protochlorophyllide reductase (DPOR) that uses Mg-ATP and reduced ferredoxin to reduce ring D of protochlorophyllide (Pchlide) to form chlorophyllide a (Chlide). This reaction is light-independent. The NB-protein (ChlN-ChlB) is the catalytic component of the complex. This Chlamydomonas reinhardtii (Chlamydomonas smithii) protein is Light-independent protochlorophyllide reductase subunit B.